A 265-amino-acid polypeptide reads, in one-letter code: Aquaporin-5 (265 aa).

The Cytoplasmic segment spans residues 1 to 12; it reads MKKEVCSLAFLK. Residues 13–33 traverse the membrane as a helical segment; that stretch reads AVFAEFLATLIFVFFGLASAL. Over 34-39 the chain is Extracellular; that stretch reads KWPSAL. The chain crosses the membrane as a helical span at residues 40–60; that stretch reads PTILQIALAFGLAIGTLAQAL. At 61-65 the chain is on the cytoplasmic side; the sequence is GPVSG. Positions 66–74 form an intramembrane region, discontinuously helical; the sequence is GHINPAITL. The NPA 1 motif lies at 69–71; the sequence is NPA. Residues 75–87 lie on the Cytoplasmic side of the membrane; sequence ALLVGNQISLLRA. The helical transmembrane segment at 88–108 threads the bilayer; the sequence is VFYVVAQLVGAIAGAGILYGL. Residues 109-126 lie on the Extracellular side of the membrane; sequence APGNARGNLAVNSLNNNT. N124 carries N-linked (GlcNAc...) asparagine glycosylation. Residues 127–147 form a helical membrane-spanning segment; the sequence is TPGQAVVVEMILTFQLALCIF. Topologically, residues 148–158 are cytoplasmic; that stretch reads SSTDSRRTSPV. The helical transmembrane segment at 159 to 179 threads the bilayer; that stretch reads GSPALSIGLSVTLGHLVGIYF. A topological domain (extracellular) is located at residue T180. The discontinuously helical intramembrane region spans 181–191; the sequence is GCSMNPARSFG. An NPA 2 motif is present at residues 185–187; that stretch reads NPA. The Extracellular segment spans residues 192–203; sequence PAVVMNRFSPSH. Residues 204 to 224 traverse the membrane as a helical segment; the sequence is WVFWVGPIVGAAVAAILYFYL. Residues 225–265 are Cytoplasmic-facing; it reads LFPNSLSLSERVAVVKGTYESEEDWEEQREERKKTMELTAH.

Belongs to the MIP/aquaporin (TC 1.A.8) family. In terms of assembly, homotetramer; each monomer provides an independent water pore. Interacts with TRPV4; the interaction is probably indirect and regulates TRPV4 activation by hypotonicity.

The protein localises to the apical cell membrane. It is found in the cell membrane. The protein resides in the cytoplasmic vesicle membrane. The catalysed reaction is H2O(in) = H2O(out). Its function is as follows. Aquaporins form homotetrameric transmembrane channels, with each monomer independently mediating water transport across the plasma membrane along its osmotic gradient. Plays an important role in fluid secretion in salivary glands. Required for TRPV4 activation by hypotonicity. Together with TRPV4, controls regulatory volume decrease in salivary epithelial cells. Seems to play a redundant role in water transport in the eye, lung and in sweat glands. In Sus scrofa (Pig), this protein is Aquaporin-5.